Reading from the N-terminus, the 198-residue chain is HTH-type transcriptional regulator BetI (198 aa).

An HTH tetR-type domain is found at 8-68; sequence PIRRQQLIDA…ATMRYLISHL (61 aa). Residues 31–50 constitute a DNA-binding region (H-T-H motif); the sequence is TIAQIARRAGVSNGIISHYF.

The protein operates within amine and polyamine biosynthesis; betaine biosynthesis via choline pathway [regulation]. Its function is as follows. Repressor involved in the biosynthesis of the osmoprotectant glycine betaine. It represses transcription of the choline transporter BetT and the genes of BetAB involved in the synthesis of glycine betaine. The polypeptide is HTH-type transcriptional regulator BetI (Serratia proteamaculans (strain 568)).